A 731-amino-acid chain; its full sequence is 1,4-alpha-glucan branching enzyme GlgB (731 aa).

The active-site Nucleophile is Asp411. The active-site Proton donor is the Glu464.

Belongs to the glycosyl hydrolase 13 family. GlgB subfamily. In terms of assembly, monomer.

It catalyses the reaction Transfers a segment of a (1-&gt;4)-alpha-D-glucan chain to a primary hydroxy group in a similar glucan chain.. It functions in the pathway glycan biosynthesis; glycogen biosynthesis. Functionally, catalyzes the formation of the alpha-1,6-glucosidic linkages in glycogen by scission of a 1,4-alpha-linked oligosaccharide from growing alpha-1,4-glucan chains and the subsequent attachment of the oligosaccharide to the alpha-1,6 position. This chain is 1,4-alpha-glucan branching enzyme GlgB, found in Mycobacterium ulcerans (strain Agy99).